Reading from the N-terminus, the 125-residue chain is MSVVGSLIFCLDCGDLLENPNAVLGSNVECSQCKAIYPKSQFSNLKVVTTTADDAFPSSLRAKKSVVKTSLKKNELKDGATIKEKCPQCGNEEMNYHTLQLRSADEGATVFYTCTSCGYKFRTNN.

The interval 1–60 (MSVVGSLIFCLDCGDLLENPNAVLGSNVECSQCKAIYPKSQFSNLKVVTTTADDAFPSSL) is interaction with RPA2. Residues 1–69 (MSVVGSLIFC…LRAKKSVVKT (69 aa)) form a necessary and sufficient for recruitment into Pol I region. Zn(2+) contacts are provided by Cys-10, Cys-13, Cys-30, Cys-33, Cys-86, Cys-89, Cys-114, and Cys-117. The C4-type zinc-finger motif lies at 10–33 (CLDCGDLLENPNAVLGSNVECSQC). Residues 79-125 (GATIKEKCPQCGNEEMNYHTLQLRSADEGATVFYTCTSCGYKFRTNN) are required for RNA cleavage, but not essential for elongation activity. A TFIIS-type zinc finger spans residues 82 to 122 (IKEKCPQCGNEEMNYHTLQLRSADEGATVFYTCTSCGYKFR).

It belongs to the archaeal RpoM/eukaryotic RPA12/RPB9/RPC11 RNA polymerase family. As to quaternary structure, component of the RNA polymerase I (Pol I) complex consisting of 14 subunits: RPA135, RPA190, RPC40, RPA14, RPB5, RPO26, RPA43, RPB8, RPA12, RPB10, RPC19, RPC10, RPA49 and RPA34. The complex is composed of a horseshoe-shaped core containing ten subunits (RPA135, RPA190, RPB5, RPO26, RPB8, RPB10, RPC10, RPA12, RPC19 and RPC40) where RPA135 and RPA190 form the DNA-binding cleft. Outside of the core, RPA14 and RPA43 form the stalk that mediates interactions with transcription initiation factors and newly synthesized RNA. Interacts with RPA2/RPA135. Peripheral subunit that binds the catalytic zinc ion that is required for RNA cleavage. The heterodimer formed by RPA34 and RPA49 stabilizes subunit RPA12 and stimulates RPA12-dependent RNA cleavage. Involved in the recruitment of RPA49 to Pol I.

The protein localises to the nucleus. It localises to the nucleolus. Its function is as follows. DNA-dependent RNA polymerases catalyze the transcription of DNA into RNA using the four ribonucleoside triphosphates as substrates. Component of RNA polymerase I (Pol I) which synthesizes ribosomal RNA precursors. Besides, RNA polymerase I has intrinsic RNA cleavage activity. Proposed to contribute to the polymerase catalytic activity and form the polymerase active center together with the two largest subunits. Subunit RPA12 contributes a catalytic zinc ribbon that is required for RNA cleavage by Pol I. Involved in transcriptional termination. This Saccharomyces cerevisiae (strain ATCC 204508 / S288c) (Baker's yeast) protein is DNA-directed RNA polymerase I subunit RPA12 (RPA12).